The chain runs to 49 residues: Turripeptide OL47 (49 aa).

The tract at residues Arg28–Asp49 is disordered. The span at Asp40 to Asp49 shows a compositional bias: pro residues.

In terms of processing, contains 4 disulfide bonds. In terms of tissue distribution, expressed by the venom duct.

The protein resides in the secreted. Acts as a neurotoxin by inhibiting an ion channel. The chain is Turripeptide OL47 from Iotyrris olangoensis (Sea snail).